We begin with the raw amino-acid sequence, 368 residues long: Phosphate acyltransferase (368 aa).

The disordered stretch occupies residues 338 to 368 (GDGGHDAGGAGTASPAPGHHAEPSAAQSSKA).

The protein belongs to the PlsX family. Homodimer. Probably interacts with PlsY.

The protein localises to the cytoplasm. The enzyme catalyses a fatty acyl-[ACP] + phosphate = an acyl phosphate + holo-[ACP]. It participates in lipid metabolism; phospholipid metabolism. In terms of biological role, catalyzes the reversible formation of acyl-phosphate (acyl-PO(4)) from acyl-[acyl-carrier-protein] (acyl-ACP). This enzyme utilizes acyl-ACP as fatty acyl donor, but not acyl-CoA. The chain is Phosphate acyltransferase from Burkholderia ambifaria (strain MC40-6).